The sequence spans 351 residues: Dysbindin (351 aa).

A Phosphoserine modification is found at Ser11. The stretch at 88–181 (EKKKTSLVEL…ELDAEHAQKV (94 aa)) forms a coiled coil. The segment at 173-331 (LDAEHAQKVL…DEEEVQVDTA (159 aa)) is dysbindin. A Nuclear export signal motif is present at residues 243 to 256 (LMDISDQEALDVFL). The tract at residues 286–351 (PNPSELRAKP…TPDGGEDSDS (66 aa)) is disordered. A compositionally biased stretch (polar residues) spans 296–305 (PSSSSTCTDS). A phosphoserine mark is found at Ser316, Ser321, and Ser349.

The protein belongs to the dysbindin family. Interacts (via its coiled coil domain) with KXD1. Interacts with CMYA5, PI4K2 and RNF151. Component of the biogenesis of lysosome-related organelles complex 1 (BLOC-1) composed of at least BLOC1S1, BLOC1S2, BLOC1S3, BLOC1S4, BLOC1S5, BLOC1S6, DTNBP1/BLOC1S7 and SNAPIN/BLOC1S8. Interacts directly in the complex with BLOC1S5, BLOC1S6 and SNAPIN/BLOC1S8. The BLOC-1 complex associates with the AP-3 protein complex and membrane protein cargos. This BLOC-1 complex also associates with the BLOC-2 complex in endosomes. Binds to DTNA and DTNB but may not be a physiological binding partner. Interacts (isoform 1 and isoform 2 only) with the DNA-dependent protein kinase complex DNA-PK; the interaction phosphorylates DTNBP1 in vitro. Interacts directly in this complex with XRCC5 and XRCC6. Interacts with AP3M1, AP3B2 and TRIM32. Interacts with XPO1; the interaction exports DTNBP1 out of the nucleus. In terms of processing, ubiquitinated by TRIM32. Ubiquitination leads to DTNBP1 degradation. Post-translationally, isoforms 1 and 2 highly phosphorylated by PRKDC in vitro. Isoform 3 only weakly phosphorylated by PRKDC in vitro. Detected in brain, in neurons and in neuropil. Isoform 1 is expressed in the cerebral cortex, and hippocampal frontal (HF). Specific expression in the posterior half of the superior temporal gyrus (pSTG). Higher expression of isoform 2 and 3 in the HF than in the pSTG while isoform 1 shows no difference in expression in these areas. In the HF, detected in dentate gyrus (DG) and in pyramidal cells of hippocampus CA2 and CA3 (at protein level). Expressed in all principal neuronal populations of the HF, namely pyramidal neurons in the subiculum and CA1-3, granule cells in the dense cell layer of the DG (DGg), and polymorph cells in the hilus of the DG (DGh). Maximal levels in CA2, CA3, and DGh. Isoform 2 not expressed in the cerebral cortex.

It is found in the cytoplasm. The protein resides in the cytoplasmic vesicle membrane. Its subcellular location is the endosome membrane. It localises to the melanosome membrane. The protein localises to the postsynaptic density. It is found in the endoplasmic reticulum. The protein resides in the nucleus. Its subcellular location is the cytoplasmic vesicle. It localises to the secretory vesicle. The protein localises to the synaptic vesicle membrane. It is found in the postsynaptic cell membrane. In terms of biological role, component of the BLOC-1 complex, a complex that is required for normal biogenesis of lysosome-related organelles (LRO), such as platelet dense granules and melanosomes. In concert with the AP-3 complex, the BLOC-1 complex is required to target membrane protein cargos into vesicles assembled at cell bodies for delivery into neurites and nerve terminals. The BLOC-1 complex, in association with SNARE proteins, is also proposed to be involved in neurite extension. Associates with the BLOC-2 complex to facilitate the transport of TYRP1 independent of AP-3 function. Plays a role in synaptic vesicle trafficking and in neurotransmitter release. Plays a role in the regulation of cell surface exposure of DRD2. May play a role in actin cytoskeleton reorganization and neurite outgrowth. May modulate MAPK8 phosphorylation. Appears to promote neuronal transmission and viability through regulating the expression of SNAP25 and SYN1, modulating PI3-kinase-Akt signaling and influencing glutamatergic release. Regulates the expression of SYN1 through binding to its promoter. Modulates prefrontal cortical activity via the dopamine/D2 pathway. The protein is Dysbindin (DTNBP1) of Homo sapiens (Human).